The following is a 321-amino-acid chain: Probable 2-oxoglutarate-dependent dioxygenase AOP1.2 (321 aa).

Positions Thr-165–Pro-270 constitute a Fe2OG dioxygenase domain. Positions 194, 196, and 251 each coordinate Fe cation. Residue Arg-261 participates in 2-oxoglutarate binding.

This sequence belongs to the iron/ascorbate-dependent oxidoreductase family. The cofactor is Fe(2+).

Probable 2-oxoglutarate-dependent dioxygenase that may be involved in glucosinolates biosynthesis. May play a role in the production of aliphatic glucosinolates. The chain is Probable 2-oxoglutarate-dependent dioxygenase AOP1.2 (AOP1.2) from Arabidopsis thaliana (Mouse-ear cress).